Reading from the N-terminus, the 152-residue chain is Clitocypin-5 (152 aa).

Homodimer.

In terms of biological role, binds and inhibits cysteine proteinases. Inhibits most strongly papain and cathepsin L, more weakly bromelain and cathepsin B while it is completely ineffective against cathepsin H. This is Clitocypin-5 (clt5) from Clitocybe nebularis (Clouded agaric).